Reading from the N-terminus, the 75-residue chain is NECIRKWLSCVDRKNDCCEGLECYKRRHSFEVCVPIPGFCLVKWKQCDGRERDCCAGLECWKRSGNKSSVCAPIA.

Disulfide bonds link C3/C18, C10/C23, C17/C33, C40/C55, C47/C60, and C54/C71. Domain repeat units lie at residues 3–33 (CIRK…FEVC) and 40–71 (CLVK…SSVC). Residues 3–71 (CIRKWLSCVD…KRSGNKSSVC (69 aa)) form a 2 X approximate repeats with cysteine pattern C-C-CC-C-C region.

It belongs to the psalmotoxin-1 family. Double-knot toxin subfamily. Expressed by the venom gland.

It is found in the secreted. Functionally, this toxin potently and selectively inhibits ASIC1a, an isoform of the gene ASIC1. It incompletely inhibits ASIC1a activation in a pH-independent and slowly reversible manner. This toxin acts by binding to and stabilizing the closed state of the channel, thereby impeding the transition into a conducting state. This toxin may bind to the acidic pocket of ASIC1a, since mutation of a key residue of this pocket (Arg-350) abolishes the ability of the toxin to inhibit ASIC1a. In vivo, this toxin protects the brain from neuronal injury when administered up to 8 hours after stroke onset. The chain is Pi-hexatoxin-Hi1d from Hadronyche infensa (Fraser island funnel-web spider).